The following is a 159-amino-acid chain: Protein-export protein SecB (159 aa).

It belongs to the SecB family. Homotetramer, a dimer of dimers. One homotetramer interacts with 1 SecA dimer.

Its subcellular location is the cytoplasm. One of the proteins required for the normal export of preproteins out of the cell cytoplasm. It is a molecular chaperone that binds to a subset of precursor proteins, maintaining them in a translocation-competent state. It also specifically binds to its receptor SecA. The sequence is that of Protein-export protein SecB from Nitrobacter winogradskyi (strain ATCC 25391 / DSM 10237 / CIP 104748 / NCIMB 11846 / Nb-255).